A 78-amino-acid polypeptide reads, in one-letter code: Exodeoxyribonuclease 7 small subunit (78 aa).

It belongs to the XseB family. As to quaternary structure, heterooligomer composed of large and small subunits.

The protein localises to the cytoplasm. The enzyme catalyses Exonucleolytic cleavage in either 5'- to 3'- or 3'- to 5'-direction to yield nucleoside 5'-phosphates.. Functionally, bidirectionally degrades single-stranded DNA into large acid-insoluble oligonucleotides, which are then degraded further into small acid-soluble oligonucleotides. This chain is Exodeoxyribonuclease 7 small subunit, found in Synechococcus sp. (strain JA-3-3Ab) (Cyanobacteria bacterium Yellowstone A-Prime).